The following is a 121-amino-acid chain: Large ribosomal subunit protein bL12 (121 aa).

It belongs to the bacterial ribosomal protein bL12 family. Homodimer. Part of the ribosomal stalk of the 50S ribosomal subunit. Forms a multimeric L10(L12)X complex, where L10 forms an elongated spine to which 2 to 4 L12 dimers bind in a sequential fashion. Binds GTP-bound translation factors.

Functionally, forms part of the ribosomal stalk which helps the ribosome interact with GTP-bound translation factors. Is thus essential for accurate translation. This is Large ribosomal subunit protein bL12 from Bacillus pumilus (strain SAFR-032).